The following is a 205-amino-acid chain: dITP/XTP pyrophosphatase (205 aa).

Residue 11 to 16 (TKNMGK) participates in substrate binding. Mg(2+) is bound by residues Glu-44 and Asp-73. Residue Asp-73 is the Proton acceptor of the active site. Residues Ser-74, 158-161 (FGYD), Lys-181, and 186-187 (HR) contribute to the substrate site.

It belongs to the HAM1 NTPase family. In terms of assembly, homodimer. The cofactor is Mg(2+).

The enzyme catalyses XTP + H2O = XMP + diphosphate + H(+). It carries out the reaction dITP + H2O = dIMP + diphosphate + H(+). It catalyses the reaction ITP + H2O = IMP + diphosphate + H(+). In terms of biological role, pyrophosphatase that catalyzes the hydrolysis of nucleoside triphosphates to their monophosphate derivatives, with a high preference for the non-canonical purine nucleotides XTP (xanthosine triphosphate), dITP (deoxyinosine triphosphate) and ITP. Seems to function as a house-cleaning enzyme that removes non-canonical purine nucleotides from the nucleotide pool, thus preventing their incorporation into DNA/RNA and avoiding chromosomal lesions. This Bacillus cereus (strain ATCC 14579 / DSM 31 / CCUG 7414 / JCM 2152 / NBRC 15305 / NCIMB 9373 / NCTC 2599 / NRRL B-3711) protein is dITP/XTP pyrophosphatase.